The following is a 1415-amino-acid chain: MKDLVKFLKAQSKTSEDFDVIKIGLASPDMIRSWSFGEVKKPETINYRTFKPERDGLFCARIFGPVKDYECLCGKYKRLKHRGVICEKCGVEVTQTKVRRERMGHIELASPVAHIWFLKSLPSRIGLLLDMPLRDIERVLYFEMYIVTEPGMTDLERGQLLTEEQYLDAEDRWQDEFEAKMGAEAIQDLLKGMDLEAECEKLREELQETNSETKRKKITKRLKLLEAFVQSGNKPEWMVMTVLPVLPPDLRPLVPLDGGRFATSDLNDLYRRVINRNNRLKRLLDLIAPDIIVRNEKRMLQESVDALLDNGRRGRAITGSNRRPLKSLADMIKGKQGRFRQNLLGKRVDYSGRSVITVGPYLHLHQCGLPKKMALELFRPFIYAKLESRGYATTIKAAKKMVEREDAIVWDILAEVIREHPILLNRAPTLHRLGIQAFEPILIEGKAIQLHPLVCAAFNADFDGDQMAVHVPLTLEAQLEARALMMSTNNVLSPANGDPIIVPSQDVVLGLYYMTREKVNGKGEGMLLQDPREAEKAYRTGEAELHSRVKVRITEYVKNEAGEFDAKTTLTDTTIGRAILWMIAPKGMPYSLFNQTLGKKAISKLINEAYRRLGLKEAVMFADQIMYTGFAYAARSGSSVGIDDMEIPAKKYEIISAAEEEVAEIQEQFQSGLVTAGERYNKVIDIWAAANERVAKAMMENLSQEEVINREGNPEKQASFNSIFMMADSGARGSAAQIRQLAGMRGLMARPDGSIIETPITANFREGLNVLQYFISTHGARKGLADTALKTANSGYLTRRLVDVAQDLVIVEDDCGTHEGLVMTPLIEGGDEKVPLRELVLGRVAAEDILKPGTEEVLIPRNTLLDEKLCDVLDANSVDSVKVRSVVTCDTDFGVCAKCYGRDLARGHLINQGEAVGVIAAQSIGEPGTQLTMRTFHIGGAASAAAKESSVQVKNTGTVHLMNAKFVTNDESKLVLTSRNTELTITDAFGRTKEHYKVPYGAVLSKGDGQEVTAGETIANWDPHTMPVVSEVSGFVKFVDIIDGLTVTRQTDELTGLSSIVVQDVGERATAGKDLRPTIKLVDANGNDIFLPETDVLAQYFLPGKAIVSLDDGTAVKVGEPLARIPQESVGTKDITGGLPRVADLFEARKPKEPAILAEISGIVSFGKETKGKRRLLITPAEGETYEEMIPKWRQLNVFEGEMVQRGDVISDGAETPHDILRLRGVRAVTEYIVNEVQDVYRLQGVKINDKHIEVIVRQMLRKAVITKAYDSEFLEGEQVEVARVKIVNRQREAEGKPPVEFERELLGITKASLATESFISAASFQETTRVLTEAAVAGKRDELRGLKENVIVGRLIPAGTGFAYHQNRHKHRLVDDVVAKLSEEDEAAIADEFVITADDATQNLATLLNSEIED.

Positions 71, 73, 86, and 89 each coordinate Zn(2+). 3 residues coordinate Mg(2+): aspartate 461, aspartate 463, and aspartate 465. 4 residues coordinate Zn(2+): cysteine 815, cysteine 889, cysteine 896, and cysteine 899.

Belongs to the RNA polymerase beta' chain family. In terms of assembly, the RNAP catalytic core consists of 2 alpha, 1 beta, 1 beta' and 1 omega subunit. When a sigma factor is associated with the core the holoenzyme is formed, which can initiate transcription. It depends on Mg(2+) as a cofactor. Requires Zn(2+) as cofactor.

The catalysed reaction is RNA(n) + a ribonucleoside 5'-triphosphate = RNA(n+1) + diphosphate. DNA-dependent RNA polymerase catalyzes the transcription of DNA into RNA using the four ribonucleoside triphosphates as substrates. In Haemophilus influenzae (strain ATCC 51907 / DSM 11121 / KW20 / Rd), this protein is DNA-directed RNA polymerase subunit beta'.